We begin with the raw amino-acid sequence, 563 residues long: Formate--tetrahydrofolate ligase (563 aa).

Residue 65–72 (TPLGEGKT) participates in ATP binding.

Belongs to the formate--tetrahydrofolate ligase family.

The enzyme catalyses (6S)-5,6,7,8-tetrahydrofolate + formate + ATP = (6R)-10-formyltetrahydrofolate + ADP + phosphate. Its pathway is one-carbon metabolism; tetrahydrofolate interconversion. The polypeptide is Formate--tetrahydrofolate ligase (Cutibacterium acnes (strain DSM 16379 / KPA171202) (Propionibacterium acnes)).